Reading from the N-terminus, the 136-residue chain is MAGVMETDEQARQRFQLELEFVQCLANPNYLNFLAQRGYLREKPFVNYLKYLLYWKEPEYAKFLKYPHCLHMLELLQYEHFRKELVNAQCAKFIDEQQILHWQHYSRKRTRLQQALAEQQQQQQPQAPSHANTTSK.

Residues 117–128 are compositionally biased toward low complexity; it reads AEQQQQQQPQAP. Residues 117–136 are disordered; sequence AEQQQQQQPQAPSHANTTSK.

Belongs to the Mediator complex subunit 31 family. In terms of assembly, component of the Mediator complex.

The protein resides in the nucleus. In terms of biological role, component of the Mediator complex, a coactivator involved in the regulated transcription of nearly all RNA polymerase II-dependent genes. Mediator functions as a bridge to convey information from gene-specific regulatory proteins to the basal RNA polymerase II transcription machinery. Mediator is recruited to promoters by direct interactions with regulatory proteins and serves as a scaffold for the assembly of a functional preinitiation complex with RNA polymerase II and the general transcription factors. This chain is Mediator of RNA polymerase II transcription subunit 31 (med31), found in Danio rerio (Zebrafish).